The sequence spans 122 residues: Venom protein 7.1 (122 aa).

The first 19 residues, 1–19, serve as a signal peptide directing secretion; that stretch reads MRFSIISASLVLIFANVKA.

Post-translationally, contains 3 disulfide bonds. In terms of tissue distribution, expressed by the venom gland.

The protein resides in the secreted. The sequence is that of Venom protein 7.1 from Lychas mucronatus (Chinese swimming scorpion).